The chain runs to 348 residues: AT-hook motif nuclear-localized protein 9 (348 aa).

Positions 18 to 156 (HRGLSGSGPP…MASVGELMPS (139 aa)) are disordered. Positions 31–46 (GSPQQQQGLRHLPNQN) are enriched in polar residues. Positions 47–60 (SPFGSGSTGFGSPS) are enriched in low complexity. Positions 98 to 106 (KRKRGRPRK) match the Bipartite nuclear localization signal motif. A DNA-binding region (a.T hook 1) is located at residues 98-110 (KRKRGRPRKYGQD). Low complexity predominate over residues 112–131 (SVSLALSSSSVSTITPNNSN). Positions 132 to 144 (KRGRGRPPGSGKK) form a DNA-binding region, a.T hook 2. Residues 157–299 (SSGMSFTPHV…EEEASEVVQE (143 aa)) form the PPC domain.

It is found in the nucleus. Transcription factor that specifically binds AT-rich DNA sequences related to the nuclear matrix attachment regions (MARs). The sequence is that of AT-hook motif nuclear-localized protein 9 from Arabidopsis thaliana (Mouse-ear cress).